Consider the following 137-residue polypeptide: DNA polymerase III subunit psi (137 aa).

It belongs to the DNA polymerase III psi/HolD chain family. As to quaternary structure, the DNA polymerase III holoenzyme complex contains at least 10 different subunits organized into 3 functionally essential subassemblies: the Pol III core, the beta sliding clamp processivity factor and the clamp-loading complex. The Pol III core (subunits alpha, epsilon and theta) contains the polymerase and the 3'-5' exonuclease proofreading activities. The polymerase is tethered to the template via the dimeric beta sliding clamp processivity factor. The clamp-loading complex (also called gamma complex) assembles the beta sliding clamp onto the primed template and plays a central role in the organization and communication at the replication fork. The clamp-loading complex contains delta, delta', psi and chi, and 3 copies of either or both of two different DnaX proteins, gamma and tau. The DNA replisome complex has a single clamp loader (3 tau and 1 each of delta, delta', psi and chi subunits) which binds 3 Pol III cores (1 core on the leading strand and 2 on the lagging strand) each with a beta sliding clamp dimer. Additional proteins in the replisome are other copies of gamma, psi (this protein) and chi (holC), SSB, DNA helicase and RNA primase. The clamp loader hydrolyzes ATP to assemble the beta processivity factor onto the primed template and plays a central role in the organization and communication at the replication fork. Interacts directly with the chi subunit (holC).

The catalysed reaction is DNA(n) + a 2'-deoxyribonucleoside 5'-triphosphate = DNA(n+1) + diphosphate. In terms of biological role, part of the beta sliding clamp loading complex, which hydrolyzes ATP to load the beta clamp onto primed DNA to form the DNA replication pre-initiation complex. DNA polymerase III is a complex, multichain enzyme responsible for most of the replicative synthesis in bacteria. This DNA polymerase also exhibits 3' to 5' exonuclease activity. The protein is DNA polymerase III subunit psi of Escherichia coli (strain K12).